The primary structure comprises 80 residues: Large ribosomal subunit protein bL31 (80 aa).

Cys16, Cys18, Cys38, and Cys41 together coordinate Zn(2+).

The protein belongs to the bacterial ribosomal protein bL31 family. Type A subfamily. Part of the 50S ribosomal subunit. Zn(2+) serves as cofactor.

In terms of biological role, binds the 23S rRNA. This Rhodococcus jostii (strain RHA1) protein is Large ribosomal subunit protein bL31.